Consider the following 357-residue polypeptide: Dual-specificity RNA methyltransferase RlmN (357 aa).

Glutamate 89 acts as the Proton acceptor in catalysis. The Radical SAM core domain maps to 109–340; the sequence is EGEKYTVCVS…CTIRESKALD (232 aa). Cysteine 116 and cysteine 345 are oxidised to a cystine. [4Fe-4S] cluster is bound by residues cysteine 123, cysteine 127, and cysteine 130. S-adenosyl-L-methionine contacts are provided by residues 173–174, serine 203, 226–228, and asparagine 302; these read GE and SLH. Residue cysteine 345 is the S-methylcysteine intermediate of the active site.

The protein belongs to the radical SAM superfamily. RlmN family. It depends on [4Fe-4S] cluster as a cofactor.

The protein resides in the cytoplasm. The catalysed reaction is adenosine(2503) in 23S rRNA + 2 reduced [2Fe-2S]-[ferredoxin] + 2 S-adenosyl-L-methionine = 2-methyladenosine(2503) in 23S rRNA + 5'-deoxyadenosine + L-methionine + 2 oxidized [2Fe-2S]-[ferredoxin] + S-adenosyl-L-homocysteine. It catalyses the reaction adenosine(37) in tRNA + 2 reduced [2Fe-2S]-[ferredoxin] + 2 S-adenosyl-L-methionine = 2-methyladenosine(37) in tRNA + 5'-deoxyadenosine + L-methionine + 2 oxidized [2Fe-2S]-[ferredoxin] + S-adenosyl-L-homocysteine. Specifically methylates position 2 of adenine 2503 in 23S rRNA and position 2 of adenine 37 in tRNAs. m2A2503 modification seems to play a crucial role in the proofreading step occurring at the peptidyl transferase center and thus would serve to optimize ribosomal fidelity. In Helicobacter pylori (strain HPAG1), this protein is Dual-specificity RNA methyltransferase RlmN.